Consider the following 542-residue polypeptide: MRRSGNYQAPVWNNDFIQSFSTDKYKDEKFLKKKEELIAQVKVLLNTKMEAVKQLELIEDLRNLGLTYYFEDEFKKILTSIYNEHKGFKNEQVGDLYFTSLAFRLLRLHGFDVSEDVFNFFKNEDGSDFKASLGENTKDVLELYEASFLIRVGEVTLEQARVFSTKILEKKVEEGIKDEKLLAWIQHSLALPLHWRIQRLEARWFLDAYKARKDMNPIIYELGKIDFHIIQETQLQEVQEVSQWWTNTNLAEKLPFVRDRIVECYFWALGLFEPHEYGYQRKMAAIIITFVTIIDDVYDVYDTLDELQLFTDAIRKWDVESISTLPYYMQVCYLAVFTYASELAYDILKDQGFNSISYLQRSWLSLVEGFFQEAKWYYAGYTPTLAEYLENAKVSISSPTIISQVYFTLPNSTERTVVENVFGYHNILYLSGMILRLADDLGTTQFELKRGDVQKAIQCYMNDNNATEEEGTEHVKYLLREAWQEMNSAMADPDCPLSEDLVFAAANLGRTSQFIYLDGDGHGVQHSEIHNQMGGLIFEPYV.

Residues Asp-295 and Asp-299 each coordinate Mn(2+). The DDXXD motif motif lies at 295–299 (DDVYD). Homodimerization regions lie at residues 301–307 (YDTLDEL) and 373–410 (EAKW…FTLP). Mn(2+)-binding residues include Asp-439 and Glu-447.

Belongs to the terpene synthase family. In terms of assembly, homodimer. Mn(2+) serves as cofactor. The cofactor is Mg(2+). As to expression, mostly expressed in flowers and, to a lower extent, in leaves, especially in glandular trichomes.

The catalysed reaction is (2E)-geranyl diphosphate = gamma-terpinene + diphosphate. The enzyme catalyses (2E)-geranyl diphosphate = alpha-terpinene + diphosphate. It participates in secondary metabolite biosynthesis; terpenoid biosynthesis. Involved in the biosynthesis of phenolic monoterpenes natural products thymol and carvacrol which have a broad range of biological activities acting as antimicrobial compounds, insecticides, antioxidants and pharmaceutical agents. Monoterpene synthase which catalyzes the conversion of geranyl diphosphate (GPP) to gamma-terpinene and the minor products alpha-thujene, alpha-terpinene, myrcene, sabinene, (+)-R-limonene, alpha-pinene and alpha-phellandrene. This Thymus vulgaris (Thyme) protein is Gamma-terpinene synthase 1.